Here is a 721-residue protein sequence, read N- to C-terminus: MSVKEKIPAFNTQEDLESYISLNAYTKVYGDFKMDLHAVEAYIQEHVKPKTKVFHSTKERLDFLVKNDYYDENIINMYSFEQFEEITRKAYAYRFRYANFMGAFKFYNAYALKTFDGKWYLENYEDRVVMNVLFLANGNYNKALKLLKQIITNRFQPATPTFLNAGRKKRGEFVSCYLLRIEDNMESIGRAITTTLQLSKRDGGVALLLTNIRESGAPIKKIENQSSGIIPIMKLLEDSFSYANQLGQRQGAGAVYLHAHHPDVMQFLDTKRENADEKIRIKSLSLGLVIPDITFTLAKNNEEMALFSPYDVYEEYGKPLSDISVTEMYYELLANQRIKKTFINARKFFQTVAELHFESGYPYILFDDTVNRRNAHPNRIVMSNLCSEIVQPSTPSEFHHDLAFKKVGNDISCNLGSLNIAKAMESGPEFSELVKLAIESLDLVSRVSNLETAPSIQKGNSENHALGLGAMNLHGFLATNQIYYNSPEAIDFTNIFFYTVAYHAFKASSELALEKGKFKNFENTKFADGSYFDKYIKVEPDFWTPKTERVKALFQKYQVEIPTRENWKELALNIQKNGLANSHLLAIAPTGSISYLSSCTPSLQPVVSPVEVRKEGRLGRIYVPAYQLNKDSYPFYKDGAYELGPEPIINIAAAAQQHVDQAISLTLFMTDKATTRDLNKAYIYAFKKGCSSIYYVRVRQEVLEDSEDHTIQMQQCEACVI.

Residues threonine 159, 175–176, glycine 204, 384–388, and 589–593 contribute to the substrate site; these read SC, NLCSE, and PTGSI. Cysteine 176 and cysteine 413 form a disulfide bridge. Catalysis depends on asparagine 384, which acts as the Proton acceptor. Cysteine 386 acts as the Cysteine radical intermediate in catalysis. Residue glutamate 388 is the Proton acceptor of the active site.

This sequence belongs to the ribonucleoside diphosphate reductase large chain family. As to quaternary structure, tetramer of two alpha and two beta subunits.

The catalysed reaction is a 2'-deoxyribonucleoside 5'-diphosphate + [thioredoxin]-disulfide + H2O = a ribonucleoside 5'-diphosphate + [thioredoxin]-dithiol. With respect to regulation, under complex allosteric control mediated by deoxynucleoside triphosphates and ATP binding. The type of nucleotide bound at the specificity site determines substrate preference. It seems probable that ATP makes the enzyme reduce CDP and UDP, dGTP favors ADP reduction and dTTP favors GDP reduction. Its function is as follows. Provides the precursors necessary for DNA synthesis. Catalyzes the biosynthesis of deoxyribonucleotides from the corresponding ribonucleotides. The chain is Ribonucleoside-diphosphate reductase subunit alpha (nrdE) from Mycoplasma pneumoniae (strain ATCC 29342 / M129 / Subtype 1) (Mycoplasmoides pneumoniae).